A 983-amino-acid chain; its full sequence is Eukaryotic translation initiation factor 4E transporter (983 aa).

Residues 1–22 form a disordered region; sequence MEKSVAETENGDAFLELKKLPT. The residue at position 4 (Ser-4) is a Phosphoserine. The YXXXXLphi motif motif lies at 29-35; the sequence is YTKEELL. The segment at 40-99 is disordered; sequence RPYSKQRPSCLSEKYDSDGVWDPEKWHASLYPASGRSSPVESLKKESESDRPSLVRRIAD. Basic and acidic residues predominate over residues 52-66; that stretch reads EKYDSDGVWDPEKWH. Phosphoserine occurs at positions 73 and 77. The span at 81-99 shows a compositional bias: basic and acidic residues; the sequence is SLKKESESDRPSLVRRIAD. Phosphoserine occurs at positions 114, 119, 135, and 137. An interaction with CSDE1 region spans residues 130-160; that stretch reads VSSRRSGSPLEKDSDGLRLLGGRRIGSGRII. A Nuclear localization signal motif is present at residues 194–210; that stretch reads RREFGDSKRVFGERRRN. The disordered stretch occupies residues 206–229; it reads ERRRNDSYTEEEPEWFSAGPTSQS. The segment at 218 to 239 is interaction with DDX6; that stretch reads PEWFSAGPTSQSETIELTGFDD. A phosphoserine mark is found at Ser-300, Ser-344, Ser-352, and Ser-373. Positions 341 to 360 are disordered; the sequence is SNPSRSGSRSSSLGSTPHEE. Residues 344–355 show a composition bias toward low complexity; the sequence is SRSGSRSSSLGS. Lys-409 is covalently cross-linked (Glycyl lysine isopeptide (Lys-Gly) (interchain with G-Cter in SUMO2)). Ser-416 carries the phosphoserine modification. Residues 437–446 carry the Nuclear export signal motif; it reads VEAGLKGLKV. Residues 447-489 form an interaction with LSM14A region; sequence DQQMKNSTPFMAEHLEETLSAASSNRQLKKDGDMTAFNKLVNT. N6-acetyllysine is present on Lys-485. Ser-563 and Ser-586 each carry phosphoserine. Disordered stretches follow at residues 585–616, 642–693, 708–800, and 906–951; these read PSPI…SAQM, FYQP…MLSP, REKT…VPGT, and LHPP…SSPV. The short motif at 612 to 637 is the Nuclear export signal element; it reads VSAQMSQLELQQAALEGLALPHDLAV. A compositionally biased stretch (basic and acidic residues) spans 651 to 660; it reads QVDRTRDGLR. Phosphoserine is present on Ser-692. The interval 694–712 is interaction with PATL1; that stretch reads SFTPTSVIRKMYESREKTK. Over residues 724-734 the composition is skewed to basic and acidic residues; it reads DGKEDTQKTSE. Composition is skewed to polar residues over residues 735–774 and 910–928; these read ENLL…QTSR and GSSS…NVPS. Ser-751, Ser-919, and Ser-949 each carry phosphoserine. Residues 938 to 983 are interaction with LSM14A; it reads QLEHRTSQRSSSPVGLAKWFGSDVLQQPLPSMPTKVISVDELEYRQ.

The protein belongs to the 4E-T/EIF4E-T family. Interacts (via YXXXXLphi motif) with EIF4E. Interacts (via YXXXXLphi motif) with EIF4E2. Interacts with DDX6. Interacts with CSDE1/UNR. Interacts with CNOT1; promoting association with the CCR4-NOT complex. Interacts with LSM14A; promoting EIF4ENIF1 localization to P-bodies. Interacts with PATL1. Interacts with importin beta only in the presence of importin alpha, suggesting a direct interaction with importin alpha. Interacts with APOBEC3G in an RNA-dependent manner. Phosphorylation by MAPK8/JNK1 and or MAPK9/JNK2 in response to oxidative stress promotes P-body assembly. Phosphorylated during meiotic maturation. As to expression, highly expressed in developing oocytes.

The protein localises to the cytoplasm. Its subcellular location is the nucleus. It is found in the PML body. It localises to the nucleus speckle. EIF4E-binding protein that regulates translation and stability of mRNAs in processing bodies (P-bodies). Plays a key role in P-bodies to coordinate the storage of translationally inactive mRNAs in the cytoplasm and prevent their degradation. Acts as a binding platform for multiple RNA-binding proteins: promotes deadenylation of mRNAs via its interaction with the CCR4-NOT complex, and blocks decapping via interaction with eIF4E (EIF4E and EIF4E2), thereby protecting deadenylated and repressed mRNAs from degradation. Component of a multiprotein complex that sequesters and represses translation of proneurogenic factors during neurogenesis. Promotes miRNA-mediated translational repression. Involved in mRNA translational repression mediated by the miRNA effector TNRC6B by protecting TNRC6B-targeted mRNAs from decapping and subsequent decay. Required for the formation of P-bodies. Also acts as a nucleoplasmic shuttling protein, which mediates the nuclear import of EIF4E and DDX6 by a piggy-back mechanism. In Mus musculus (Mouse), this protein is Eukaryotic translation initiation factor 4E transporter.